The chain runs to 314 residues: Replication initiation protein (314 aa).

Polar residues predominate over residues Met-1 to Ser-10. Residues Met-1–Gly-25 are disordered. Over residues Asn-11–Asn-20 the composition is skewed to basic and acidic residues.

Belongs to the plasmid replication initiation factor family.

In terms of biological role, this protein is probably a specific topoisomerase involved in initiating replication. This protein is specifically required and may be rate-limiting for replication of the plasmid in vivo. This is Replication initiation protein (repN) from Staphylococcus aureus.